Here is a 1222-residue protein sequence, read N- to C-terminus: Kinesin-related protein 9 (1222 aa).

The span at 1 to 25 shows a compositional bias: polar residues; sequence MDNNNNNFSTPKQPTINSTTGGQLR. Disordered stretches follow at residues 1–55, 75–165, and 188–343; these read MDNN…ITNS, MDSL…STNI, and SSNT…TQPL. Low complexity predominate over residues 26–55; it reads SRSNSSPSTSSISTPRNGSTTATTSSITNS. A compositionally biased stretch (polar residues) spans 75–85; that stretch reads MDSLSTPMSQS. 4 stretches are compositionally biased toward low complexity: residues 122–165, 194–209, 216–238, and 254–325; these read SFIS…STNI, SSLP…PLSN, NHHL…ISTT, and NLTT…RTPI. Residues 326 to 343 are compositionally biased toward polar residues; it reads QNFNSVGGVNITSKTQPL. One can recognise a Kinesin motor domain in the interval 350–719; the sequence is SIQAVCRFRP…LNFGQRAQSV (370 aa). 438 to 445 is an ATP binding site; it reads GQTGAGKT. Residues 724-1026 are a coiled coil; it reads LQNVEESHSE…DTLTNKLEIQ (303 aa). The interval 1144–1174 is disordered; the sequence is NINNNNNIKNNNNNNKLKSKKVGSSSSSSSN. A helical membrane pass occupies residues 1183–1203; that stretch reads ILFFLIILVILFFLMVAVGLT.

It belongs to the TRAFAC class myosin-kinesin ATPase superfamily. Kinesin family.

It is found in the membrane. The protein localises to the cytoplasm. Its subcellular location is the cytoskeleton. Microtubule-associated force-producing protein that plays a role in organelle transport. Its motor activity is directed toward the microtubule's plus end. This Dictyostelium discoideum (Social amoeba) protein is Kinesin-related protein 9 (kif9).